The primary structure comprises 1224 residues: Potassium channel subfamily T member 1 (1224 aa).

Positions 1-37 (MARAKLPRSPSEGKAGPGDTPAGAAAPEEPHGLSPLL) are disordered. The Cytoplasmic portion of the chain corresponds to 1–79 (MARAKLPRSP…LFFIKNQRSS (79 aa)). Over residues 13 to 27 (GKAGPGDTPAGAAAP) the composition is skewed to low complexity. Residues 80-112 (LRIRLFNFSLKLLTCLLYIVRVLLDNPDQGIGC) form a helical membrane-spanning segment. Over 113–139 (WGCTKYNYTFNGSSSEFHWAPILWVER) the chain is Extracellular. N-linked (GlcNAc...) asparagine glycosylation is found at asparagine 119 and asparagine 123. The helical transmembrane segment at 140-164 (KMALWVIQVIVATISFLETMLIIYL) threads the bilayer. Over 165–178 (SYKGNIWEQIFHVS) the chain is Cytoplasmic. Residues 179-194 (FVLEMINTLPFIITVF) form a helical membrane-spanning segment. Topologically, residues 195–201 (WPPLRNL) are extracellular. A helical membrane pass occupies residues 202–219 (FIPVFLNCWLAKHALENM). Residues 220–232 (INDFHRAILRTQS) lie on the Cytoplasmic side of the membrane. Residues 233–260 (AMFNQVLILFCTLLCLVFTGTCGIQHLE) traverse the membrane as a helical segment. At 261-267 (RAGGNLN) the chain is on the extracellular side. The segment at residues 268–288 (LLTSFYFCIVTFSTVGFGDVT) is an intramembrane region (pore-forming). Residues valine 282 and glycine 283 each contribute to the K(+) site. The Extracellular segment spans residues 289–290 (PK). The helical transmembrane segment at 291-324 (IWPSQLLVVILICVTLVVLPLQFEELVYLWMERQ) threads the bilayer. Over 325–1224 (KSGGNYSRHR…NPETRDETQL (900 aa)) the chain is Cytoplasmic. An RCK N-terminal 1 domain is found at 338 to 474 (EKHVVLCVSS…FHVKFADHVV (137 aa)). Leucine 499, histidine 502, serine 524, and asparagine 526 together coordinate Na(+). A disordered region spans residues 644–675 (QNTDCRPSQGGSGGDGTKLTLPTENGSGSRRP). The segment covering 663-673 (TLPTENGSGSR) has biased composition (polar residues). The Zn(2+) site is built by cysteine 744 and cysteine 745. Residues arginine 747 and lysine 750 each contribute to the K(+) site. 2 residues coordinate Na(+): arginine 747 and lysine 750. Zn(2+) contacts are provided by cysteine 752 and histidine 754. 4 residues coordinate K(+): asparagine 755, tyrosine 757, tyrosine 763, and glycine 764. Residue tyrosine 757 coordinates Na(+). Phenylalanine 765 is a Na(+) binding site. Residues 767–907 (NKLIIVSAET…QFRAKDSYSL (141 aa)) form the RCK N-terminal 2 domain. 5 residues coordinate K(+): serine 773, leucine 804, aspartate 806, glycine 828, and aspartate 851. 2 disordered regions span residues 1038–1066 (REAK…ADPV) and 1198–1224 (SSSQ…ETQL). 2 stretches are compositionally biased toward low complexity: residues 1045–1055 (GTRAASGSGST) and 1198–1215 (SSSQ…SSCN).

Belongs to the potassium channel family. Calcium-activated (TC 1.A.1.3) subfamily. KCa4.1/KCNT1 sub-subfamily. In terms of assembly, homotetramer; which constitutes the Na(+)-activated K(+) channel. Interacts with KCNT2; these heterodimer channels differ from the homomers in their unitary conductance, kinetic behavior, subcellular localization, and response to activation of protein kinase C. Interacts (via C-terminus) with FMR1; this interaction alters gating properties of KCNT1. Interacts with CRBN via its cytoplasmic C-terminus. In terms of processing, phosphorylated by protein kinase C. Phosphorylation of the C-terminal domain increases channel activity. As to expression, enriched in the brainstem and olfactory bulb and detected at significant levels in four different brain regions.

It is found in the cell membrane. The catalysed reaction is K(+)(in) = K(+)(out). With respect to regulation, activated by high intracellular Na(+). In addition to activation by Na(+), is cooperatively activated by intracellular Cl(-) levels. Inhibited by Zn(2+). Activated upon stimulation of G-protein coupled receptors, such as CHRM1 and GRIA1. In terms of biological role, sodium-activated K(+) channel. Acts as an important mediator of neuronal membrane excitability. Contributes to the delayed outward currents. Regulates neuronal bursting in sensory neurons. Contributes to synaptic development and plasticity. This Mus musculus (Mouse) protein is Potassium channel subfamily T member 1 (Kcnt1).